A 92-amino-acid chain; its full sequence is Defensin-like protein 249 (92 aa).

A signal peptide spans 1-24; sequence MKLAAIFLASSVLLSLLPIHLSQG. Disulfide bonds link Cys-34–Cys-91, Cys-45–Cys-74, Cys-53–Cys-84, and Cys-72–Cys-86.

The protein belongs to the DEFL family.

Its subcellular location is the secreted. In Arabidopsis thaliana (Mouse-ear cress), this protein is Defensin-like protein 249 (SCRL7).